The following is a 424-amino-acid chain: Phosphoprotein associated with glycosphingolipid-enriched microdomains 1 (424 aa).

At 1 to 17 the chain is on the extracellular side; that stretch reads MGPAGSALSSGQMQMQM. A helical; Signal-anchor for type III membrane protein transmembrane segment spans residues 18 to 38; the sequence is VLWGSLAAVAMFFLITFLILL. 2 S-palmitoyl cysteine lipidation sites follow: cysteine 39 and cysteine 42. Residues 39–424 are Cytoplasmic-facing; the sequence is CSSCDRDKKP…LQQGRDVTRL (386 aa). Phosphoserine is present on residues serine 52 and serine 63. A Phosphotyrosine; by LYN modification is found at tyrosine 107. Residue serine 157 is modified to Phosphoserine. Phosphotyrosine is present on residues tyrosine 165, tyrosine 183, and tyrosine 224. The segment at 194–347 is disordered; the sequence is DKSQGGKSKS…GPPQRSSSSC (154 aa). The segment covering 215–230 has biased composition (basic and acidic residues); it reads AEGKADFAEYASVDRN. Serine 226 carries the phosphoserine modification. Residues 236 to 247 are compositionally biased toward polar residues; that stretch reads STNAESILGTSS. Tyrosine 314 carries the post-translational modification Phosphotyrosine; by FYN and LYN. Residues 314-317 form an interaction with CSK region; the sequence is YSSV. Polar residues predominate over residues 331 to 347; the sequence is STCQCPQGPPQRSSSSC. Position 346 is a phosphoserine (serine 346). A phosphotyrosine mark is found at tyrosine 351, tyrosine 381, and tyrosine 409. The tract at residues 361–424 is disordered; that stretch reads PNSISMLPPA…LQQGRDVTRL (64 aa). An interaction with NHERF1 region spans residues 422–424; that stretch reads TRL.

In terms of assembly, interacts with NHERF1/EBP50. In resting T-cells, part of a PAG1-NHERF1-MSN complex which is disrupted upon TCR activation. When phosphorylated, interacts with CSK. Identified in a complex with LYN and STAT3. Interacts with LYN. Post-translationally, palmitoylated. In terms of processing, phosphorylated by FYN on Tyr-314 in resting T-cells; which promotes interaction with CSK. Dephosphorylated by PTPRC/CD45 upon TCR activation; which leads to CSK dissociation. May also be dephosphorylated by PTPN11. Hyperphosphorylated in mast cells upon FCER1 activation. Phosphorylated by LYN in response to EPO. As to expression, ubiquitously expressed, with highest levels in developing brain, lung, thymus, spleen and testis. Present in mast cells.

Its subcellular location is the cell membrane. Functionally, negatively regulates TCR (T-cell antigen receptor)-mediated signaling in T-cells and FCER1 (high affinity immunoglobulin epsilon receptor)-mediated signaling in mast cells. Promotes CSK activation and recruitment to lipid rafts, which results in LCK inhibition. Inhibits immunological synapse formation by preventing dynamic arrangement of lipid raft proteins. May be involved in cell adhesion signaling. This is Phosphoprotein associated with glycosphingolipid-enriched microdomains 1 (Pag1) from Rattus norvegicus (Rat).